Consider the following 425-residue polypeptide: MLDIKWIRENPEKLDKALVSRGLEPQAERLIQLDFARRSHVAKVQLAQERRNAVSKEIGQALAVSDEKMAERLRSEVEELKVFLSSATAEEKQLTESLEKILSALPNIPLDDVPEGKDESDNVVIRHFGLPPTFNFTPKEHFDLGQDLKQMNFERASRLSGTRFTVLSGALARLERALGQFMLDVHVNEHGYTEVSVPLLVRDEIVYGAAQLPKFAEDLFQTTDGRWLISTAEVPLTNLVNDEILEVSDLPLRFSSLSPCFRSEAGAAGRDTRGMLRQHQFWKVEMVSITSEEQSLMELERMTECAEDILKRLGLPFRTVVLSTGDMGFAARKTYDIEVWLPGQECYREISSCSVCGDFQGRRMNARYRKEGDKKLHFVHSLNGSGTAVGRCLIAVLENYQQADGSIIVPDVLQPYMGGMRCISA.

An L-serine-binding site is contributed by 231–233 (TAE). 262 to 264 (RSE) provides a ligand contact to ATP. L-serine is bound at residue Glu285. 349–352 (EISS) is an ATP binding site. Residue Ser385 coordinates L-serine.

Belongs to the class-II aminoacyl-tRNA synthetase family. Type-1 seryl-tRNA synthetase subfamily. In terms of assembly, homodimer. The tRNA molecule binds across the dimer.

It is found in the cytoplasm. It catalyses the reaction tRNA(Ser) + L-serine + ATP = L-seryl-tRNA(Ser) + AMP + diphosphate + H(+). It carries out the reaction tRNA(Sec) + L-serine + ATP = L-seryl-tRNA(Sec) + AMP + diphosphate + H(+). It functions in the pathway aminoacyl-tRNA biosynthesis; selenocysteinyl-tRNA(Sec) biosynthesis; L-seryl-tRNA(Sec) from L-serine and tRNA(Sec): step 1/1. Its function is as follows. Catalyzes the attachment of serine to tRNA(Ser). Is also able to aminoacylate tRNA(Sec) with serine, to form the misacylated tRNA L-seryl-tRNA(Sec), which will be further converted into selenocysteinyl-tRNA(Sec). This chain is Serine--tRNA ligase, found in Bartonella tribocorum (strain CIP 105476 / IBS 506).